Consider the following 75-residue polypeptide: UPF0352 protein YejL (75 aa).

This sequence belongs to the UPF0352 family.

This Salmonella arizonae (strain ATCC BAA-731 / CDC346-86 / RSK2980) protein is UPF0352 protein YejL.